A 208-amino-acid polypeptide reads, in one-letter code: 3-demethoxyubiquinol 3-hydroxylase (208 aa).

Positions 57, 87, 90, 139, 171, and 174 each coordinate Fe cation.

The protein belongs to the COQ7 family. Fe cation serves as cofactor.

Its subcellular location is the cell membrane. It carries out the reaction a 5-methoxy-2-methyl-3-(all-trans-polyprenyl)benzene-1,4-diol + AH2 + O2 = a 3-demethylubiquinol + A + H2O. The protein operates within cofactor biosynthesis; ubiquinone biosynthesis. Functionally, catalyzes the hydroxylation of 2-nonaprenyl-3-methyl-6-methoxy-1,4-benzoquinol during ubiquinone biosynthesis. This Janthinobacterium sp. (strain Marseille) (Minibacterium massiliensis) protein is 3-demethoxyubiquinol 3-hydroxylase.